An 84-amino-acid polypeptide reads, in one-letter code: Cell division topological specificity factor (84 aa).

The protein belongs to the MinE family.

Its function is as follows. Prevents the cell division inhibition by proteins MinC and MinD at internal division sites while permitting inhibition at polar sites. This ensures cell division at the proper site by restricting the formation of a division septum at the midpoint of the long axis of the cell. The polypeptide is Cell division topological specificity factor (Pseudomonas fluorescens (strain SBW25)).